A 610-amino-acid chain; its full sequence is Dihydroxy-acid dehydratase (610 aa).

Aspartate 81 provides a ligand contact to Mg(2+). Cysteine 122 lines the [2Fe-2S] cluster pocket. Residues aspartate 123 and lysine 124 each contribute to the Mg(2+) site. Lysine 124 carries the post-translational modification N6-carboxylysine. A [2Fe-2S] cluster-binding site is contributed by cysteine 196. A Mg(2+)-binding site is contributed by glutamate 492. Serine 518 serves as the catalytic Proton acceptor.

This sequence belongs to the IlvD/Edd family. In terms of assembly, homodimer. It depends on [2Fe-2S] cluster as a cofactor. The cofactor is Mg(2+).

The enzyme catalyses (2R)-2,3-dihydroxy-3-methylbutanoate = 3-methyl-2-oxobutanoate + H2O. The catalysed reaction is (2R,3R)-2,3-dihydroxy-3-methylpentanoate = (S)-3-methyl-2-oxopentanoate + H2O. Its pathway is amino-acid biosynthesis; L-isoleucine biosynthesis; L-isoleucine from 2-oxobutanoate: step 3/4. It participates in amino-acid biosynthesis; L-valine biosynthesis; L-valine from pyruvate: step 3/4. Functionally, functions in the biosynthesis of branched-chain amino acids. Catalyzes the dehydration of (2R,3R)-2,3-dihydroxy-3-methylpentanoate (2,3-dihydroxy-3-methylvalerate) into 2-oxo-3-methylpentanoate (2-oxo-3-methylvalerate) and of (2R)-2,3-dihydroxy-3-methylbutanoate (2,3-dihydroxyisovalerate) into 2-oxo-3-methylbutanoate (2-oxoisovalerate), the penultimate precursor to L-isoleucine and L-valine, respectively. This Ruegeria pomeroyi (strain ATCC 700808 / DSM 15171 / DSS-3) (Silicibacter pomeroyi) protein is Dihydroxy-acid dehydratase.